The sequence spans 634 residues: MLRSLKPVTAFALKRSLLSIKQVHGTQSVLRSPVRNSSSISSADEDPNLPWYLRTETKVAKPIEMPELPESSPQKLHELVKYFIKDLGIEDIKVFDLSMNEEEEVDGSKFLGKYMVIGTGKSNKHLAKAGTEMMNFLKHEYGTPSSNIEGLVKDTLLIRQQKRLKRKGGKLSSPQSNDFGVSANSWIMIDTNIDDIYVHFLTEKRRKELNLEYLWCSAEDRPLYHQEVATTQSDDIFSGIRNYHTSSRTSRTYGVSRPQHLPSFTRSYSSTPSINELVHLSESGSYQEISKFTNHNDPEVTQLILLSHINFFQNLPLNKAIAHADELYKSFEAAFPAFDASSDHWKIRYLFLDMMHKVDKSRWSFSIIENNFYGKSSHGHRLTEEDLKYFIKSVIESPELSNRYLDPNSNYDHDSTPFKDEGSESFVSISNNKLGKIAKFIQLCYPDLPEGNVFNHFESWDSTVLPLLLTVVSQTTHENFITPVKLSELSSPIANHKPVPYNKTHLDALLEVIRVSQPNFLLNDETRMNFIFILTILANAHEWERVYKLWDAALENSVPINPGSTFKPDTRPWAYLIDLVAKIGDPANARVFLQKRWPQMIHNGIDATDPKIGTATAVLLKVADPENVLFKNVK.

The N-terminal 36 residues, 1-36, are a transit peptide targeting the mitochondrion; that stretch reads MLRSLKPVTAFALKRSLLSIKQVHGTQSVLRSPVRN.

This sequence belongs to the ATP25 family.

It is found in the mitochondrion inner membrane. Probable mitochondrial mRNA stabilization factor. In Komagataella phaffii (strain GS115 / ATCC 20864) (Yeast), this protein is ATPase synthesis protein 25, mitochondrial (ATP25).